The primary structure comprises 455 residues: Mitochondrial distribution and morphology protein 10 (455 aa).

3 disordered regions span residues 216-249, 278-311, and 377-399; these read WETT…EDAV, IRFS…PSPA, and PRSS…PLGE. Residues 217 to 227 are compositionally biased toward low complexity; it reads ETTNGENGTNT. Residues 228-237 show a composition bias toward polar residues; the sequence is SAPGNASNSR. The segment covering 291–301 has biased composition (pro residues); that stretch reads AQIPPPSPFTP.

This sequence belongs to the MDM10 family. Component of the ER-mitochondria encounter structure (ERMES) or MDM complex, composed of MMM1, MDM10, MDM12 and MDM34. Associates with the mitochondrial outer membrane sorting assembly machinery SAM(core) complex.

The protein resides in the mitochondrion outer membrane. Component of the ERMES/MDM complex, which serves as a molecular tether to connect the endoplasmic reticulum and mitochondria. Components of this complex are involved in the control of mitochondrial shape and protein biogenesis and may function in phospholipid exchange. MDM10 is involved in the late assembly steps of the general translocase of the mitochondrial outer membrane (TOM complex). Functions in the TOM40-specific route of the assembly of outer membrane beta-barrel proteins, including the association of TOM40 with the receptor TOM22 and small TOM proteins. Can associate with the SAM(core) complex as well as the MDM12-MMM1 complex, both involved in late steps of the major beta-barrel assembly pathway, that is responsible for biogenesis of all outer membrane beta-barrel proteins. May act as a switch that shuttles between both complexes and channels precursor proteins into the TOM40-specific pathway. Plays a role in mitochondrial morphology and in the inheritance of mitochondria. The polypeptide is Mitochondrial distribution and morphology protein 10 (Coprinopsis cinerea (strain Okayama-7 / 130 / ATCC MYA-4618 / FGSC 9003) (Inky cap fungus)).